The primary structure comprises 283 residues: DegV domain-containing protein BH3627 (283 aa).

Residues Ile-4–Ile-281 enclose the DegV domain. Hexadecanoate-binding residues include Thr-62 and Ser-95.

May bind long-chain fatty acids, such as palmitate, and may play a role in lipid transport or fatty acid metabolism. In Halalkalibacterium halodurans (strain ATCC BAA-125 / DSM 18197 / FERM 7344 / JCM 9153 / C-125) (Bacillus halodurans), this protein is DegV domain-containing protein BH3627.